The chain runs to 398 residues: MNKKKLGVRLLSLLALGGFVLANPVFADQNFARNEKEAKDSAITFIQKSAAIKAGARSAEDIKLDKVNLGGELSGSNMYVYNISTGGFVIVSGDKRSPEILGYSTSGSFDANGKENIASFMESYVEQIKENKKLDTTYAGTAEIKQPVVKSLLDSKGIHYNQGNPYNLLTPVIEKVKPGEQSFVGQHAATGCVATATAQIMKYHNYPNKGLKDYTYTLSSNNPYFNHPKNLFAAISTRQYNWNNILPTYSGRESNVQKMAISELMADVGISVDMDYGPSSGSAGSSRVQRALKENFGYNQSVHQINRGDFSKQDWEAQIDKELSQNQPVYYQGVGKVGGHAFVIDGADGRNFYHVNWGWGGVSDGFFRLDALNPSALGTGGGAGGFNGYQSAVVGIKP.

The signal sequence occupies residues 1 to 27 (MNKKKLGVRLLSLLALGGFVLANPVFA). Residues 28 to 145 (DQNFARNEKE…TTYAGTAEIK (118 aa)) constitute a propeptide that is removed on maturation. The active-site Nucleophile is C192. Position 192 is a cysteine methyl disulfide; in zymogen form (C192). A protein contacts are provided by S282 and G339. The Proton acceptor role is filled by H340. A C-terminal active site loop region spans residues 368-390 (RLDALNPSALGTGGGAGGFNGYQ).

This sequence belongs to the peptidase C10 family. As to quaternary structure, monomer. The mature protease is derived from the precursor sequence by cleavage, either in cis via an autocatalytic mechanism, or in trans by mature SpeB or host proteases (trypsin, plasmin or subtilisin). Maturation can involve a number of protein cleavage intermediates. Mature SpeB probably plays the most important role in protein maturation in physiological conditions. Post-translationally, methylthiolation at Cys-192 of the inactive zymogen form is probably involved in the mechanism of secretion of the proteinase into the culture fluid.

The protein resides in the secreted. Its subcellular location is the host extracellular space. The protein localises to the host cytoplasm. The enzyme catalyses Preferential cleavage with hydrophobic residues at P2, P1 and P1'.. Its activity is regulated as follows. Synthesized as an inactive zymogen to protect the intracellular components of the bacteria from proteolytic activity during protein production. Once secreted into the extracellular milieu, cleaved into the active protease: maturation can be mediated in cis by autocatalytic cleavage, or in trans by mature SpeB or host proteases. Protease activity is strongly inhibited by zinc and copper, which prevent its maturation into an active protease: inhibition by metal ions may be required to prevent proteolysis of streptococcal proteins. In terms of biological role, cysteine protease that acts as a key streptococcal virulence factor by cleaving host proteins involved in immune response. Triggers inflammation by mediating cleavage of host proteins, which can both promote host pathogenesis by triggering sterile inflammation and/or restrict streptococcal infection, depending on host immune statue and infection site. Cleaves host gasdermin-A (GSDMA) in epithelial cells, promoting GSDMA activation and formation of gasdermin pores, triggering pyroptosis. Pyroptosis triggers the elimination of the infected skin cell, depriving the pathogen of its protective niche, while inducing an inflammatory response. This ultimately prevents bacterial penetration of the epithelial barrier and a subsequent systemic dissemination of the pathogen. Also mediates cleavage of the cytokine precursor interleukin-1 beta (IL1B) to its mature form, resulting in inflammation and septic shock. SpeB-mediated maturation of IL1B plays a dual role depending on infection site: while IL1B inflammatory response prevents bacterial growth during invasive skin infections, it promotes streptococcal infection of the nasopharynx by disrupting colonization resistance mediated by the microbiota. Inhibits host autophagy be catalyzing cleavage and inactivation of key autophagy factors, such as CALCOCO2, NBR1 and SQSTM1. Cleaves and inhibits a number of complement factors, such as C2, C3-beta chain of C3, C4, C5 or SERPING1, thereby promoting evasion of host immunity. May also impair adaptive immunity by catalyzing cleavage and degradation of host immunoglobulins to promote immune system evasion; the relevance of this activity is however unsure in vivo. Catalyzes maturation and release of the peptide hormone bradykinin from the precursor Kininogen-1 (KNG1) to produce hypotension during septic shock. Also involved in bacterial translocation across the host epithelial barrier by mediating cleavage and degradation of host epithelial junction proteins, such as CDH1 and OCLN. Additionally, has been involved in degradation of fibronectin and vitronectin, two host extracellular matrix proteins involved in tissue integrity. Also able to catalyze cleavage and degradation of streptococcal proteins, such as C5a peptidase, EndoS or SmeZ. Degradation of streptococcal proteins is however strictly regulated to preserve integrity of other virulence factors. This is Streptopain from Streptococcus pyogenes serotype M1.